The chain runs to 348 residues: Short-chain dehydrogenase fogG (348 aa).

NADP(+)-binding residues include L51, R75, D100, and N126. Residues S180 and Y215 each act as proton donor in the active site. NADP(+) is bound by residues Y215 and K219. K219 serves as the catalytic Lowers pKa of active site Tyr.

Belongs to the short-chain dehydrogenases/reductases (SDR) family.

The protein operates within secondary metabolite biosynthesis. Functionally, short-chain dehydrogenase; part of the gene cluster that mediates the biosynthesis of flavoglaucin and congeners (including aspergin, dihydroauroglaucin and auroglaucin), prenylated salicylaldehyde derivatives carrying a saturated or an unsaturated C-7 side chain. The PKS fogA releases the carboxylic acid (8E,10E,12E)-3,5,7-trihydroxytetradeca-8,10,12-trienoic acid as its product, as well as derivatives with one and two double bonds. FogA is indeed able to reduce the initial triketide, thus being at least partially responsible for the differently saturated heptyl side chains of flavoglaucin congeners. The oxidoreductases fogB, fogC and fogD modify the nascent polyketide in fogA-bound form and, together, fogA, fogB, fogC and fogD are necessary for the formation of the aromatic core and the cyclized PKS products are released as salicyl alcohols. In particular, fogB is responsible for oxidation of a hydroxyl group or reduction of remaining double bond(s) at the C-7 residue whereas fogD is probably involved in the reductive release of the modified PKS products. The cytochrome P450 monooxygenase fogE is then responsible for the hydroxylation at C-3 of the benzene ring. The fogE products are substrates of the prenyltransferase fogH and the prenylated benzyl alcohols are subsequently oxidized by the fogF to produce the final aryl aldehydes flavoglaucin and congeners. The short-chain dehydrogenase fogG does not seem to be involved in the biosynthesis of the prenylated salicylaldehyde derivatives. This chain is Short-chain dehydrogenase fogG, found in Aspergillus ruber (strain CBS 135680).